Reading from the N-terminus, the 272-residue chain is Shikimate dehydrogenase (NADP(+)) (272 aa).

Shikimate contacts are provided by residues 14-16 (SKS) and Thr-61. Lys-65 serves as the catalytic Proton acceptor. An NADP(+)-binding site is contributed by Glu-77. Residues Asn-86 and Asp-102 each contribute to the shikimate site. NADP(+) is bound by residues 126–130 (GAGGA), 149–154 (NRTVSR), and Met-213. Tyr-215 serves as a coordination point for shikimate. Gly-237 lines the NADP(+) pocket.

It belongs to the shikimate dehydrogenase family. Homodimer.

It catalyses the reaction shikimate + NADP(+) = 3-dehydroshikimate + NADPH + H(+). Its pathway is metabolic intermediate biosynthesis; chorismate biosynthesis; chorismate from D-erythrose 4-phosphate and phosphoenolpyruvate: step 4/7. Its function is as follows. Involved in the biosynthesis of the chorismate, which leads to the biosynthesis of aromatic amino acids. Catalyzes the reversible NADPH linked reduction of 3-dehydroshikimate (DHSA) to yield shikimate (SA). In Shigella boydii serotype 18 (strain CDC 3083-94 / BS512), this protein is Shikimate dehydrogenase (NADP(+)).